The chain runs to 508 residues: Histidine ammonia-lyase (508 aa).

Positions 145-147 (ASG) form a cross-link, 5-imidazolinone (Ala-Gly). Position 146 is a 2,3-didehydroalanine (Ser) (Ser-146).

Belongs to the PAL/histidase family. Post-translationally, contains an active site 4-methylidene-imidazol-5-one (MIO), which is formed autocatalytically by cyclization and dehydration of residues Ala-Ser-Gly.

It localises to the cytoplasm. It carries out the reaction L-histidine = trans-urocanate + NH4(+). Its pathway is amino-acid degradation; L-histidine degradation into L-glutamate; N-formimidoyl-L-glutamate from L-histidine: step 1/3. This Myxococcus xanthus (strain DK1622) protein is Histidine ammonia-lyase.